A 236-amino-acid chain; its full sequence is Uridylate kinase (236 aa).

Residue 10–13 coordinates ATP; it reads KLSG. UMP is bound at residue Gly-52. 2 residues coordinate ATP: Gly-53 and Arg-57. Residues Asp-72 and 133-140 contribute to the UMP site; that span reads TGNPFFTT. The ATP site is built by Thr-160, Tyr-166, and Asp-169.

Belongs to the UMP kinase family. Homohexamer.

It localises to the cytoplasm. It catalyses the reaction UMP + ATP = UDP + ADP. The protein operates within pyrimidine metabolism; CTP biosynthesis via de novo pathway; UDP from UMP (UMPK route): step 1/1. With respect to regulation, inhibited by UTP. Functionally, catalyzes the reversible phosphorylation of UMP to UDP. The chain is Uridylate kinase from Cupriavidus necator (strain ATCC 17699 / DSM 428 / KCTC 22496 / NCIMB 10442 / H16 / Stanier 337) (Ralstonia eutropha).